The primary structure comprises 428 residues: 2,3-bisphosphoglycerate-independent phosphoglycerate mutase 2 (428 aa).

Belongs to the BPG-independent phosphoglycerate mutase family. A-PGAM subfamily.

It catalyses the reaction (2R)-2-phosphoglycerate = (2R)-3-phosphoglycerate. It participates in carbohydrate degradation; glycolysis; pyruvate from D-glyceraldehyde 3-phosphate: step 3/5. In terms of biological role, catalyzes the interconversion of 2-phosphoglycerate and 3-phosphoglycerate. The protein is 2,3-bisphosphoglycerate-independent phosphoglycerate mutase 2 (apgM2) of Methanocaldococcus jannaschii (strain ATCC 43067 / DSM 2661 / JAL-1 / JCM 10045 / NBRC 100440) (Methanococcus jannaschii).